Consider the following 266-residue polypeptide: Nickel import ATP-binding protein NikE (266 aa).

In terms of domain architecture, ABC transporter spans Ile4–Glu252. Gly45–Ser52 lines the ATP pocket.

Belongs to the ABC transporter superfamily. Nickel importer (TC 3.A.1.5.3) family. The complex is composed of two ATP-binding proteins (NikD and NikE), two transmembrane proteins (NikB and NikC) and a solute-binding protein (NikA).

Its subcellular location is the cell inner membrane. It catalyses the reaction Ni(2+)(out) + ATP + H2O = Ni(2+)(in) + ADP + phosphate + H(+). Functionally, part of the ABC transporter complex NikABCDE involved in nickel import. Responsible for energy coupling to the transport system. This Brucella suis biovar 1 (strain 1330) protein is Nickel import ATP-binding protein NikE.